Consider the following 114-residue polypeptide: U17-barytoxin-Tl1a (114 aa).

Positions 1-20 are cleaved as a signal peptide; it reads MKTIIVFLSLLVLATKFGDA. The propeptide occupies 21–74; sequence NEGVNQEQMKEVIQNEFREDFLNEMAPMSLLQQLEAIESTLLEKEADRNSRQKR. Disulfide bonds link cysteine 75/cysteine 88, cysteine 82/cysteine 93, and cysteine 87/cysteine 108.

It belongs to the neurotoxin 14 (magi-1) family. 03 (ICK-30-40) subfamily. Expressed by the venom gland.

It localises to the secreted. In terms of biological role, ion channel inhibitor. The sequence is that of U17-barytoxin-Tl1a from Trittame loki (Brush-footed trapdoor spider).